Here is a 195-residue protein sequence, read N- to C-terminus: Peptidyl-tRNA hydrolase (195 aa).

Tyr-17 provides a ligand contact to tRNA. The Proton acceptor role is filled by His-22. TRNA-binding residues include Phe-68, Asn-70, and Asn-116.

The protein belongs to the PTH family. Monomer.

It localises to the cytoplasm. It carries out the reaction an N-acyl-L-alpha-aminoacyl-tRNA + H2O = an N-acyl-L-amino acid + a tRNA + H(+). Its function is as follows. Hydrolyzes ribosome-free peptidyl-tRNAs (with 1 or more amino acids incorporated), which drop off the ribosome during protein synthesis, or as a result of ribosome stalling. Functionally, catalyzes the release of premature peptidyl moieties from peptidyl-tRNA molecules trapped in stalled 50S ribosomal subunits, and thus maintains levels of free tRNAs and 50S ribosomes. This Shewanella denitrificans (strain OS217 / ATCC BAA-1090 / DSM 15013) protein is Peptidyl-tRNA hydrolase.